The chain runs to 344 residues: UDP-N-acetylglucosamine--N-acetylmuramyl-(pentapeptide) pyrophosphoryl-undecaprenol N-acetylglucosamine transferase (344 aa).

UDP-N-acetyl-alpha-D-glucosamine is bound by residues 9 to 11, N118, R157, S188, and Q282; that span reads TGG.

Belongs to the glycosyltransferase 28 family. MurG subfamily.

The protein resides in the cell inner membrane. The catalysed reaction is di-trans,octa-cis-undecaprenyl diphospho-N-acetyl-alpha-D-muramoyl-L-alanyl-D-glutamyl-meso-2,6-diaminopimeloyl-D-alanyl-D-alanine + UDP-N-acetyl-alpha-D-glucosamine = di-trans,octa-cis-undecaprenyl diphospho-[N-acetyl-alpha-D-glucosaminyl-(1-&gt;4)]-N-acetyl-alpha-D-muramoyl-L-alanyl-D-glutamyl-meso-2,6-diaminopimeloyl-D-alanyl-D-alanine + UDP + H(+). It functions in the pathway cell wall biogenesis; peptidoglycan biosynthesis. Functionally, cell wall formation. Catalyzes the transfer of a GlcNAc subunit on undecaprenyl-pyrophosphoryl-MurNAc-pentapeptide (lipid intermediate I) to form undecaprenyl-pyrophosphoryl-MurNAc-(pentapeptide)GlcNAc (lipid intermediate II). This chain is UDP-N-acetylglucosamine--N-acetylmuramyl-(pentapeptide) pyrophosphoryl-undecaprenol N-acetylglucosamine transferase, found in Aquifex aeolicus (strain VF5).